The sequence spans 277 residues: Probable endonuclease 4 (277 aa).

Residues histidine 67, histidine 107, glutamate 142, aspartate 176, histidine 179, histidine 211, aspartate 224, histidine 226, and glutamate 256 each contribute to the Zn(2+) site.

Belongs to the AP endonuclease 2 family. Zn(2+) is required as a cofactor.

The enzyme catalyses Endonucleolytic cleavage to 5'-phosphooligonucleotide end-products.. In terms of biological role, endonuclease IV plays a role in DNA repair. It cleaves phosphodiester bonds at apurinic or apyrimidinic (AP) sites, generating a 3'-hydroxyl group and a 5'-terminal sugar phosphate. The polypeptide is Probable endonuclease 4 (Clostridium botulinum (strain Alaska E43 / Type E3)).